The following is a 445-amino-acid chain: Exodeoxyribonuclease 7 large subunit (445 aa).

Belongs to the XseA family. As to quaternary structure, heterooligomer composed of large and small subunits.

It is found in the cytoplasm. It catalyses the reaction Exonucleolytic cleavage in either 5'- to 3'- or 3'- to 5'-direction to yield nucleoside 5'-phosphates.. Functionally, bidirectionally degrades single-stranded DNA into large acid-insoluble oligonucleotides, which are then degraded further into small acid-soluble oligonucleotides. This is Exodeoxyribonuclease 7 large subunit from Delftia acidovorans (strain DSM 14801 / SPH-1).